A 324-amino-acid polypeptide reads, in one-letter code: Methionyl-tRNA formyltransferase (324 aa).

Position 113–116 (113–116 (SLLP)) interacts with (6S)-5,6,7,8-tetrahydrofolate.

It belongs to the Fmt family.

It carries out the reaction L-methionyl-tRNA(fMet) + (6R)-10-formyltetrahydrofolate = N-formyl-L-methionyl-tRNA(fMet) + (6S)-5,6,7,8-tetrahydrofolate + H(+). Attaches a formyl group to the free amino group of methionyl-tRNA(fMet). The formyl group appears to play a dual role in the initiator identity of N-formylmethionyl-tRNA by promoting its recognition by IF2 and preventing the misappropriation of this tRNA by the elongation apparatus. The polypeptide is Methionyl-tRNA formyltransferase (Bacteroides fragilis (strain ATCC 25285 / DSM 2151 / CCUG 4856 / JCM 11019 / LMG 10263 / NCTC 9343 / Onslow / VPI 2553 / EN-2)).